The primary structure comprises 307 residues: Formate hydrogenlyase subunit 4 (307 aa).

Residues 1-2 (MS) lie on the Periplasmic side of the membrane. The chain crosses the membrane as a helical span at residues 3–23 (VLYPLIQALVLFAVAPLLSGI). Residues 24-67 (TRVARARLHNRRGPGVLQEYRDIIKLLGRQSVGPDASGWVFRLT) lie on the Cytoplasmic side of the membrane. Residues 68 to 88 (PYVMVGVMLTIATALPVVTVG) traverse the membrane as a helical segment. The Periplasmic segment spans residues 89-93 (SPLPQ). Residues 94 to 114 (LGDLITLLYLFAIARFFFAIS) traverse the membrane as a helical segment. Topologically, residues 115–131 (GLDTGSPFTAIGASREA) are cytoplasmic. The helical transmembrane segment at 132–152 (MLGVLVEPMLLLGLWVAAQVA) threads the bilayer. Over 153–167 (GSTNISNITDTVYHW) the chain is Periplasmic. Residues 168 to 188 (PLSQSIPLVLALCACAFATFI) traverse the membrane as a helical segment. The Cytoplasmic segment spans residues 189–221 (EMGKLPFDLAEAEQELQEGPLSEYSGSGFGVMK). The chain crosses the membrane as a helical span at residues 222–242 (WGISLKQLVVLQMFVGVFIPW). Residues 243–253 (GQMETFTAGGL) lie on the Periplasmic side of the membrane. A helical membrane pass occupies residues 254-274 (LLALVIAIVKLVVGVLVIALF). The Cytoplasmic portion of the chain corresponds to 275-284 (ENSMARLRLD). The helical transmembrane segment at 285–305 (ITPRITWAGFGFAFLAFVSLL) threads the bilayer. At 306-307 (AA) the chain is on the periplasmic side.

The protein belongs to the complex I subunit 1 family. In terms of assembly, FHL comprises of a formate dehydrogenase, unidentified electron carriers and a hydrogenase (isoenzyme 3). In this non-energy conserving pathway molecular hydrogen and carbodioxide from formate are released.

The protein resides in the cell inner membrane. This is Formate hydrogenlyase subunit 4 (hycD) from Escherichia coli (strain K12).